Reading from the N-terminus, the 98-residue chain is MASRFMTDPHAMRDMAGRFEVHAQTVEDEARRMWASAQNISGAGWSGQAEATSLDTMTQMNQAFRNIVNMLHGVRDGLVRDANNYEQQEQASQQILSS.

The protein belongs to the WXG100 family. CFP-10 subfamily.

It is found in the secreted. The chain is ESAT-6-like protein EsxM (esxM) from Mycobacterium bovis (strain ATCC BAA-935 / AF2122/97).